We begin with the raw amino-acid sequence, 503 residues long: Maturase K (503 aa).

It belongs to the intron maturase 2 family. MatK subfamily.

It localises to the plastid. The protein resides in the chloroplast. Its function is as follows. Usually encoded in the trnK tRNA gene intron. Probably assists in splicing its own and other chloroplast group II introns. This is Maturase K from Backhousia myrtifolia (Grey myrtle).